The sequence spans 294 residues: NAD kinase (294 aa).

The Proton acceptor role is filled by Asp74. NAD(+) contacts are provided by residues 74-75, Lys79, 149-150, Asp179, 190-195, and Ala214; these read DG, NE, and TGYSLS.

Belongs to the NAD kinase family. Requires a divalent metal cation as cofactor.

Its subcellular location is the cytoplasm. It carries out the reaction NAD(+) + ATP = ADP + NADP(+) + H(+). Its function is as follows. Involved in the regulation of the intracellular balance of NAD and NADP, and is a key enzyme in the biosynthesis of NADP. Catalyzes specifically the phosphorylation on 2'-hydroxyl of the adenosine moiety of NAD to yield NADP. The chain is NAD kinase from Christiangramia forsetii (strain DSM 17595 / CGMCC 1.15422 / KT0803) (Gramella forsetii).